The sequence spans 337 residues: Ornithine carbamoyltransferase (337 aa).

Residues serine 56–threonine 59, glutamine 83, arginine 107, and histidine 134–glutamine 137 each bind carbamoyl phosphate. L-ornithine contacts are provided by residues asparagine 168, aspartate 232, and serine 236 to methionine 237. Carbamoyl phosphate contacts are provided by residues cysteine 274–leucine 275 and arginine 320.

Belongs to the aspartate/ornithine carbamoyltransferase superfamily. OTCase family.

It localises to the cytoplasm. It carries out the reaction carbamoyl phosphate + L-ornithine = L-citrulline + phosphate + H(+). Its pathway is amino-acid biosynthesis; L-arginine biosynthesis; L-arginine from L-ornithine and carbamoyl phosphate: step 1/3. Reversibly catalyzes the transfer of the carbamoyl group from carbamoyl phosphate (CP) to the N(epsilon) atom of ornithine (ORN) to produce L-citrulline. The protein is Ornithine carbamoyltransferase (argI) of Shigella flexneri.